We begin with the raw amino-acid sequence, 521 residues long: Glucose-1-phosphate adenylyltransferase small subunit, chloroplastic/amyloplastic (521 aa).

Positions 1–32 (MAASIGALKSSPSSNNCINERRNDSTRAVSSR) are disordered. The transit peptide at 1–72 (MAASIGALKS…RSPMIVSPKA (72 aa)) directs the protein to the chloroplast. Lysine 268 provides a ligand contact to substrate. Residues 444–454 (TDADRKLLAAK) are allosteric regulation.

It belongs to the bacterial/plant glucose-1-phosphate adenylyltransferase family. In terms of assembly, heterotetramer. Leaves and tubers.

It localises to the plastid. Its subcellular location is the chloroplast. The protein resides in the amyloplast. The enzyme catalyses alpha-D-glucose 1-phosphate + ATP + H(+) = ADP-alpha-D-glucose + diphosphate. Its pathway is glycan biosynthesis; starch biosynthesis. Activated by 3'phosphoglycerate, inhibited by orthophosphate. Allosteric regulation. Functionally, this protein plays a role in synthesis of starch. It catalyzes the synthesis of the activated glycosyl donor, ADP-glucose from Glc-1-P and ATP. The polypeptide is Glucose-1-phosphate adenylyltransferase small subunit, chloroplastic/amyloplastic (Solanum tuberosum (Potato)).